A 362-amino-acid chain; its full sequence is Chorismate synthase (362 aa).

Residues Arg-48 and Arg-54 each coordinate NADP(+). Residues 125-127, 238-239, Gly-278, 293-297, and Arg-319 contribute to the FMN site; these read RSS, NA, and KPTSS.

This sequence belongs to the chorismate synthase family. In terms of assembly, homotetramer. The cofactor is FMNH2.

It catalyses the reaction 5-O-(1-carboxyvinyl)-3-phosphoshikimate = chorismate + phosphate. It functions in the pathway metabolic intermediate biosynthesis; chorismate biosynthesis; chorismate from D-erythrose 4-phosphate and phosphoenolpyruvate: step 7/7. Catalyzes the anti-1,4-elimination of the C-3 phosphate and the C-6 proR hydrogen from 5-enolpyruvylshikimate-3-phosphate (EPSP) to yield chorismate, which is the branch point compound that serves as the starting substrate for the three terminal pathways of aromatic amino acid biosynthesis. This reaction introduces a second double bond into the aromatic ring system. The sequence is that of Chorismate synthase from Psychromonas ingrahamii (strain DSM 17664 / CCUG 51855 / 37).